The following is a 1042-amino-acid chain: Protein phosphatase Slingshot homolog 1 (1042 aa).

Positions 1 to 12 (MALVTLQRSPTP) are enriched in polar residues. Residues 1–29 (MALVTLQRSPTPSAASSSASNSELEAGSD) are disordered. Position 2 is an N-acetylalanine (alanine 2). Low complexity predominate over residues 13 to 22 (SAASSSASNS). Phosphoserine is present on residues serine 37 and serine 57. Residues 249–304 (ERTERLIKAKLRSIMMSQDLENVTSKEIRNELEKQMNCNLKEFKEFIDNEMLLILG) form the DEK-C domain. Residues 308-449 (KPSLIFDHLY…LSEYEGILDA (142 aa)) enclose the Tyrosine-protein phosphatase domain. Catalysis depends on cysteine 393, which acts as the Phosphocysteine intermediate. Serine 516 is modified (phosphoserine). 4 disordered regions span residues 576–609 (FGNS…ASTQ), 668–766 (MERH…PHCD), 858–900 (IPEE…LDHT), and 915–942 (PTSS…KPGL). Residues 675 to 693 (SSSAICTQPTFLPHVTSSP) are compositionally biased toward polar residues. The segment covering 697-712 (ASSRSRAPERPASGPA) has biased composition (low complexity). A compositionally biased stretch (polar residues) spans 886 to 900 (LQKSPTSTLPRLDHT). At serine 889 the chain carries Phosphoserine. The interaction with YWHAG stretch occupies residues 889-1042 (SPTSTLPRLD…LKSPSRVNKS (154 aa)). Residues 917 to 935 (SSSISSNLTRSSSSDSIHS) show a composition bias toward low complexity. Position 970 is a phosphoserine (serine 970). A compositionally biased stretch (polar residues) spans 985 to 995 (SSEADTSTIAD). Residues 985–1042 (SSEADTSTIADSQDAKCGLSSSFLPEPQSAPRDPAATSKSSGKSAPEHLKSPSRVNKS) are disordered.

It belongs to the protein-tyrosine phosphatase family. As to quaternary structure, interacts with the 14-3-3 proteins YWHAB, YWHAG, YWHAQ, and YWHAZ. Interaction with 14-3-3 proteins inhibits phosphatase activity and also blocks recruitment to lamellipodia and stimulation by actin. Interacts with actin and this stimulates phosphatase activity. Interacts with LIMK1. Post-translationally, phosphorylated. Inhibitory phosphorylation by PAK4 promotes binding to YWHAZ. Phosphorylation at Ser-970 is decreased by stimuli which promote actin reorganization and lamellipodia formation. Can be dephosphorylated and activated by PPP3CA/calcineurin A. Phosphorylation decreases immediately prior to telophase. As to expression, expressed in brain, heart, kidney and thymus. Also expressed at lower levels in liver, skeletal muscle, small intestine and spleen.

Its subcellular location is the cytoplasm. It localises to the cytoskeleton. The protein localises to the cleavage furrow. The protein resides in the midbody. The enzyme catalyses O-phospho-L-tyrosyl-[protein] + H2O = L-tyrosyl-[protein] + phosphate. It carries out the reaction O-phospho-L-seryl-[protein] + H2O = L-seryl-[protein] + phosphate. The catalysed reaction is O-phospho-L-threonyl-[protein] + H2O = L-threonyl-[protein] + phosphate. Protein phosphatase which regulates actin filament dynamics. Dephosphorylates and activates the actin binding/depolymerizing factor cofilin, which subsequently binds to actin filaments and stimulates their disassembly. Inhibitory phosphorylation of cofilin is mediated by LIMK1, which may also be dephosphorylated and inactivated by this protein. The polypeptide is Protein phosphatase Slingshot homolog 1 (Mus musculus (Mouse)).